The sequence spans 247 residues: Carboxy-S-adenosyl-L-methionine synthase (247 aa).

Residues Tyr39, 64 to 66 (GCS), 89 to 90 (DN), 117 to 118 (DI), Asn132, and Arg199 contribute to the S-adenosyl-L-methionine site.

The protein belongs to the class I-like SAM-binding methyltransferase superfamily. Cx-SAM synthase family. Homodimer.

The catalysed reaction is prephenate + S-adenosyl-L-methionine = carboxy-S-adenosyl-L-methionine + 3-phenylpyruvate + H2O. Its function is as follows. Catalyzes the conversion of S-adenosyl-L-methionine (SAM) to carboxy-S-adenosyl-L-methionine (Cx-SAM). The protein is Carboxy-S-adenosyl-L-methionine synthase of Citrobacter koseri (strain ATCC BAA-895 / CDC 4225-83 / SGSC4696).